Reading from the N-terminus, the 206-residue chain is Two-component response regulator ARR7 (206 aa).

The Response regulatory domain maps to His25–Met152. 4-aspartylphosphate is present on Asp85. The segment at Ser165–Leu206 is disordered.

It belongs to the ARR family. Type-A subfamily. Two-component system major event consists of a His-to-Asp phosphorelay between a sensor histidine kinase (HK) and a response regulator (RR). In plants, the His-to-Asp phosphorelay involves an additional intermediate named Histidine-containing phosphotransfer protein (HPt). This multistep phosphorelay consists of a His-Asp-His-Asp sequential transfer of a phosphate group between first a His and an Asp of the HK protein, followed by the transfer to a conserved His of the HPt protein and finally the transfer to an Asp in the receiver domain of the RR protein. Predominantly expressed in roots and young flowers.

It is found in the nucleus. Its function is as follows. Functions as a response regulator involved in His-to-Asp phosphorelay signal transduction system. Phosphorylation of the Asp residue in the receiver domain activates the ability of the protein to promote the transcription of target genes. Type-A response regulators seem to act as negative regulators of the cytokinin signaling. The polypeptide is Two-component response regulator ARR7 (ARR7) (Arabidopsis thaliana (Mouse-ear cress)).